The sequence spans 576 residues: Eukaryotic translation initiation factor 3 subunit D (576 aa).

Residues 103-176 form a disordered region; it reads DSTKTRFGRG…KDYDKPQRNR (74 aa). Over residues 110–122 the composition is skewed to gly residues; sequence GRGGLARGRGQRG. The span at 165–176 shows a compositional bias: basic and acidic residues; that stretch reads GWKDYDKPQRNR. The segment at 304–318 is RNA gate; sequence TLDMVTVNENAADAP.

This sequence belongs to the eIF-3 subunit D family. Component of the eukaryotic translation initiation factor 3 (eIF-3) complex.

It is found in the cytoplasm. Its function is as follows. mRNA cap-binding component of the eukaryotic translation initiation factor 3 (eIF-3) complex, which is involved in protein synthesis of a specialized repertoire of mRNAs and, together with other initiation factors, stimulates binding of mRNA and methionyl-tRNAi to the 40S ribosome. The eIF-3 complex specifically targets and initiates translation of a subset of mRNAs involved in cell proliferation. In the eIF-3 complex, eif3d specifically recognizes and binds the 7-methylguanosine cap of a subset of mRNAs. This Botryotinia fuckeliana (strain B05.10) (Noble rot fungus) protein is Eukaryotic translation initiation factor 3 subunit D.